The sequence spans 426 residues: Multifunctional protein ADE2 (426 aa).

Residues 1 to 261 (MAPAASELKL…WVAERVELLL (261 aa)) are SAICAR synthetase. The AIR carboxylase stretch occupies residues 262-426 (KTKSQGRVVV…ADKKLRECTL (165 aa)).

This sequence in the N-terminal section; belongs to the SAICAR synthetase family. In the C-terminal section; belongs to the AIR carboxylase family. Class II subfamily. As to quaternary structure, homooctamer.

The catalysed reaction is 5-amino-1-(5-phospho-D-ribosyl)imidazole-4-carboxylate + L-aspartate + ATP = (2S)-2-[5-amino-1-(5-phospho-beta-D-ribosyl)imidazole-4-carboxamido]succinate + ADP + phosphate + 2 H(+). It carries out the reaction 5-amino-1-(5-phospho-D-ribosyl)imidazole-4-carboxylate + H(+) = 5-amino-1-(5-phospho-beta-D-ribosyl)imidazole + CO2. It participates in purine metabolism; IMP biosynthesis via de novo pathway; 5-amino-1-(5-phospho-D-ribosyl)imidazole-4-carboxamide from 5-amino-1-(5-phospho-D-ribosyl)imidazole-4-carboxylate: step 1/2. It functions in the pathway purine metabolism; IMP biosynthesis via de novo pathway; 5-amino-1-(5-phospho-D-ribosyl)imidazole-4-carboxylate from 5-amino-1-(5-phospho-D-ribosyl)imidazole (carboxylase route): step 1/1. This Gallus gallus (Chicken) protein is Multifunctional protein ADE2 (AIRC).